A 360-amino-acid chain; its full sequence is Phospho-N-acetylmuramoyl-pentapeptide-transferase (360 aa).

Transmembrane regions (helical) follow at residues 18–38 (VFSYVTFRAILGLLTALVFSL), 73–93 (TMGGLLILAGIFVSVLLWGDL), 97–117 (YVLVMLFVLGSFGTIGFIDDY), 134–154 (YILQSLAALVVAVFLYSSSTL), 168–188 (VMPQLGLVFIVLAYFTIVGAS), 199–219 (GLAIMPTVMVAGAFALIAYLS), 236–256 (AGELVIVCTAIVGAGLGFLWF), 263–283 (VFMGDVGSLALGAALGAIAVL), 288–308 (ILLVIMGGVFVMETVSVILQV), and 338–358 (VIVRFWIISLFLVLLGLATLK).

It belongs to the glycosyltransferase 4 family. MraY subfamily. The cofactor is Mg(2+).

The protein localises to the cell inner membrane. The catalysed reaction is UDP-N-acetyl-alpha-D-muramoyl-L-alanyl-gamma-D-glutamyl-meso-2,6-diaminopimeloyl-D-alanyl-D-alanine + di-trans,octa-cis-undecaprenyl phosphate = di-trans,octa-cis-undecaprenyl diphospho-N-acetyl-alpha-D-muramoyl-L-alanyl-D-glutamyl-meso-2,6-diaminopimeloyl-D-alanyl-D-alanine + UMP. The protein operates within cell wall biogenesis; peptidoglycan biosynthesis. In terms of biological role, catalyzes the initial step of the lipid cycle reactions in the biosynthesis of the cell wall peptidoglycan: transfers peptidoglycan precursor phospho-MurNAc-pentapeptide from UDP-MurNAc-pentapeptide onto the lipid carrier undecaprenyl phosphate, yielding undecaprenyl-pyrophosphoryl-MurNAc-pentapeptide, known as lipid I. This Shewanella denitrificans (strain OS217 / ATCC BAA-1090 / DSM 15013) protein is Phospho-N-acetylmuramoyl-pentapeptide-transferase.